The sequence spans 197 residues: Caspase recruitment domain-containing protein 16 (197 aa).

One can recognise a CARD domain in the interval 1-91 (MADKVLKEKR…YLAETLGLSA (91 aa)).

Homooligomer. Interacts with CASP1, CASP4, CARD8 and RIPK2. As to expression, widely expressed. Expressed at higher level in placenta, spleen, lymph node and bone marrow. Weakly or not expressed in thymus.

Its function is as follows. Caspase inhibitor. Acts as a regulator of procaspase-1/CASP1 activation implicated in the regulation of the proteolytic maturation of pro-interleukin-1 beta (IL1B) and its release during inflammation. Inhibits the release of IL1B in response to LPS in monocytes. Also induces NF-kappa-B activation during the pro-inflammatory cytokine response. Also able to inhibit CASP1-mediated neuronal cell death, TNF-alpha, hypoxia-, UV-, and staurosporine-mediated cell death but not ER stress-mediated cell death. Acts by preventing activation of caspases CASP1 and CASP4, possibly by preventing the interaction between CASP1 and RIPK2. In Homo sapiens (Human), this protein is Caspase recruitment domain-containing protein 16 (CARD16).